A 583-amino-acid chain; its full sequence is Inactive carboxylesterase-like protein VdtD (583 aa).

The N-terminal stretch at 1 to 23 (MFMTQIVFGIAPTLLKTFSHLTA) is a signal peptide. N-linked (GlcNAc...) asparagine glycans are attached at residues Asn84, Asn109, Asn221, Asn265, Asn307, Asn350, Asn388, Asn448, and Asn468.

Belongs to the type-B carboxylesterase/lipase family.

It participates in secondary metabolite biosynthesis. Inactive carboxylesterase-like protein; part of the gene cluster that mediates the biosynthesis of viriditoxin, one of the 'classical' secondary metabolites produced by fungi and that has antibacterial activity. The first step is performed by the polyketide synthase VdtA which condenses one acetyl-CoA and 6 malonyl-CoA units to form the heptaketide monomer backbone of viriditoxin. The product of VdtA is then O-methylated on C7 by the O-methyltransferase VdtC. The O-methyl group is important for the stereoselective coupling of the monomers at the final step of viriditoxin biosynthesis. The short-chain dehydrogenase/reductase VdtF then acts as a stereospecific reductase converting the pyrone to dihydropyrone via the reduction of the C3-C4 double bond. The FAD-binding monooxygenase VdtE then converts the ketone group into a methyl-ester group to yield semi-viriditoxin. Finally, the laccase VdtB is involved in dimerization of 2 semi-viriditoxin molecules to yield the final viriditoxin. VdtB is responsible for the regioselective 6,6'-coupling of semi-viriditoxin, which yields (M)-viriditoxin and (P)-viriditoxin at a ratio of 1:2. The non-catalytic carboxylesterase-like protein VdtD affects the stereochemistical outcome of the coupling. The highly reducing polyketide synthase VdtX is not involved in viriditoxin synthesis, but might possibly play a role in the production of additional metabolites not identified yet. This Byssochlamys spectabilis (Paecilomyces variotii) protein is Inactive carboxylesterase-like protein VdtD.